The following is a 264-amino-acid chain: Anamorsin homolog 2 (264 aa).

Positions 1-142 (MAATAAALAV…KVSWSMGSSF (142 aa)) are N-terminal SAM-like domain. Positions 143–174 (PLKKATKGLPKIQIDDDSELIDEDSLLTEDDL) are linker. The [2Fe-2S] cluster site is built by cysteine 185, cysteine 194, cysteine 197, and cysteine 199. The fe-S binding site A stretch occupies residues 185-199 (CEVGATRKACKNCTC). Residues cysteine 225, cysteine 228, cysteine 236, and cysteine 239 each contribute to the [4Fe-4S] cluster site. 2 consecutive short sequence motifs (cx2C motif) follow at residues 225–228 (CGNC) and 236–239 (CGTC). The segment at 225–239 (CGNCGLGDAFRCGTC) is fe-S binding site B.

Belongs to the anamorsin family. In terms of assembly, monomer. [2Fe-2S] cluster serves as cofactor. The cofactor is [4Fe-4S] cluster.

It localises to the cytoplasm. The protein localises to the mitochondrion intermembrane space. Component of the cytosolic iron-sulfur (Fe-S) protein assembly (CIA) machinery. Required for the maturation of extramitochondrial Fe-S proteins. Part of an electron transfer chain functioning in an early step of cytosolic Fe-S biogenesis, facilitating the de novo assembly of a [4Fe-4S] cluster on the cytosolic Fe-S scaffold complex. Electrons are transferred from NADPH via a FAD- and FMN-containing diflavin oxidoreductase. Together with the diflavin oxidoreductase, also required for the assembly of the diferric tyrosyl radical cofactor of ribonucleotide reductase (RNR), probably by providing electrons for reduction during radical cofactor maturation in the catalytic small subunit. In Oryza sativa subsp. indica (Rice), this protein is Anamorsin homolog 2.